Here is a 466-residue protein sequence, read N- to C-terminus: Chromosomal replication initiator protein DnaA (466 aa).

Residues 1–86 (MSLSLWQQCL…EVGTKPVTQT (86 aa)) are domain I, interacts with DnaA modulators. The interval 86–129 (TLKTPVHNVVAPTQTTTAQPQRVAPAARSGWDNVPAPAEPTYRS) is domain II. The interval 130–346 (NVNVKHTFDN…GALNRVIANA (217 aa)) is domain III, AAA+ region. Gly174, Gly176, Lys177, and Thr178 together coordinate ATP. The tract at residues 347–466 (NFTGRAITID…FSNLIRTLSS (120 aa)) is domain IV, binds dsDNA.

It belongs to the DnaA family. In terms of assembly, oligomerizes as a right-handed, spiral filament on DNA at oriC.

Its subcellular location is the cytoplasm. Plays an essential role in the initiation and regulation of chromosomal replication. ATP-DnaA binds to the origin of replication (oriC) to initiate formation of the DNA replication initiation complex once per cell cycle. Binds the DnaA box (a 9 base pair repeat at the origin) and separates the double-stranded (ds)DNA. Forms a right-handed helical filament on oriC DNA; dsDNA binds to the exterior of the filament while single-stranded (ss)DNA is stabiized in the filament's interior. The ATP-DnaA-oriC complex binds and stabilizes one strand of the AT-rich DNA unwinding element (DUE), permitting loading of DNA polymerase. After initiation quickly degrades to an ADP-DnaA complex that is not apt for DNA replication. Binds acidic phospholipids. In Salmonella gallinarum (strain 287/91 / NCTC 13346), this protein is Chromosomal replication initiator protein DnaA.